The chain runs to 206 residues: Guanylate kinase (206 aa).

The 179-residue stretch at Phe5–Lys183 folds into the Guanylate kinase-like domain. Residue Gly12–Ser19 coordinates ATP.

The protein belongs to the guanylate kinase family.

It is found in the cytoplasm. It catalyses the reaction GMP + ATP = GDP + ADP. Essential for recycling GMP and indirectly, cGMP. The protein is Guanylate kinase (gmk) of Helicobacter pylori (strain ATCC 700392 / 26695) (Campylobacter pylori).